The following is a 353-amino-acid chain: Protein CYTOKININ-RESPONSIVE GATA TRANSCRIPTION FACTOR 1 (353 aa).

A Nuclear localization signal 1 motif is present at residues 137–144; the sequence is IRKGAATD. A disordered region spans residues 142-166; that stretch reads ATDPEGGAVRKPRRRAQAHQDESQQ. The GATA-type zinc finger occupies 178–203; the sequence is CSDCNTTKTPLWRSGPCGPKSLCNAC. The Nuclear localization signal 2 motif lies at 244-251; sequence EKRAADVD.

The protein belongs to the type IV zinc-finger family. Class B subfamily. Mostly expressed in leaves and stems, and, at low levels, in roots.

Its subcellular location is the nucleus. Transcriptional regulator that specifically binds 5'-GATA-3' or 5'-GAT-3' motifs within gene promoters. Influences the expression of nuclear encoded chloroplast-targeted genes. Regulates chloroplast development and promotes chlorophyll accumulation. Modulates plant architecture (e.g. height, length and width of leaf blades, and flowering tillers production) and represses tillering, probably by modulating number of cells. Promotes senescence. Involved in grain filling, panicle development and starch production. In Oryza sativa subsp. japonica (Rice), this protein is Protein CYTOKININ-RESPONSIVE GATA TRANSCRIPTION FACTOR 1.